The primary structure comprises 384 residues: Iron(3+)-hydroxamate import system permease protein FhuB (384 aa).

9 helical membrane passes run 58–78 (GAVI…FLSI), 115–135 (TAAA…MQGM), 154–174 (FAVS…LVLW), 176–196 (FAGA…SRGG), 202–222 (LALA…AIAI), 243–263 (WSGV…AFFI), 296–316 (VILT…GLII), 330–350 (WIIP…DIAA), and 357–377 (FETP…FYLA).

The protein belongs to the binding-protein-dependent transport system permease family. FecCD subfamily. In terms of assembly, the complex is composed of an ATP-binding protein (FhuC), two transmembrane proteins (FhuB and FhuG) and a solute-binding protein (FhuD or YxeB).

It localises to the cell membrane. It is found in the membrane raft. Functionally, part of the ABC transporter complex FhuBGCD involved in iron(3+)-hydroxamate import. Responsible for the translocation of the substrate across the membrane. In Bacillus subtilis (strain 168), this protein is Iron(3+)-hydroxamate import system permease protein FhuB (fhuB).